Consider the following 1122-residue polypeptide: Adhesin P1 (1122 aa).

The signal sequence occupies residues 1–30 (MKKLIFKLSVGITPLALIGLGSFGLAVSGA). 3 disordered regions span residues 183–209 (AGDT…GGAV), 244–273 (DYNS…GGRT), and 544–563 (QNSG…NGNE). Gly residues predominate over residues 195–208 (AGGGSGSSAAGGGA). Residues 259 to 273 (LDSSESSESINGGRT) are compositionally biased toward polar residues. A helical membrane pass occupies residues 997–1021 (VLPVAISIPIIIIALALALGLGIGI). Residues 1066 to 1122 (KTPQMLQANKKDGASSPSKPSAPAAKKPTGPTKPSAPGAKPTAPAKPKAPAPTKKIE) are disordered. The span at 1079–1122 (ASSPSKPSAPAAKKPTGPTKPSAPGAKPTAPAKPKAPAPTKKIE) shows a compositional bias: low complexity.

Belongs to the adhesin P1 family.

It localises to the cell membrane. Functionally, could be involved in cytadherence. This chain is Adhesin P1 (gapA), found in Mycoplasmoides gallisepticum (Mycoplasma gallisepticum).